A 430-amino-acid chain; its full sequence is Enolase (430 aa).

A (2R)-2-phosphoglycerate-binding site is contributed by Gln163. The active-site Proton donor is the Glu205. Mg(2+)-binding residues include Asp242, Glu287, and Asp314. The (2R)-2-phosphoglycerate site is built by Lys339, Arg368, Ser369, and Lys390. Lys339 acts as the Proton acceptor in catalysis.

It belongs to the enolase family. The cofactor is Mg(2+).

The protein resides in the cytoplasm. Its subcellular location is the secreted. The protein localises to the cell surface. It carries out the reaction (2R)-2-phosphoglycerate = phosphoenolpyruvate + H2O. The protein operates within carbohydrate degradation; glycolysis; pyruvate from D-glyceraldehyde 3-phosphate: step 4/5. Catalyzes the reversible conversion of 2-phosphoglycerate (2-PG) into phosphoenolpyruvate (PEP). It is essential for the degradation of carbohydrates via glycolysis. The sequence is that of Enolase from Alkaliphilus metalliredigens (strain QYMF).